The primary structure comprises 551 residues: Cleavage and polyadenylation specificity factor subunit 6 (551 aa).

The tract at residues 1-213 (MADGVDHIDI…RGRFPGAVPG (213 aa)) is necessary for interaction with NXF1. The region spanning 81-161 (IALYIGNLTW…QSPVVTPCNK (81 aa)) is the RRM domain. Residues 81-161 (IALYIGNLTW…QSPVVTPCNK (81 aa)) are necessary for interaction with NUDT21/CPSF5. Residues 81–161 (IALYIGNLTW…QSPVVTPCNK (81 aa)) are necessary for nuclear paraspeckles localization. Position 157 is a phosphothreonine (Thr-157). Positions 169-180 (MQSRKTTQSGQM) are enriched in polar residues. Disordered stretches follow at residues 169–411 (MQSR…PLSE) and 477–551 (LHGI…YRHR). Residues 184–193 (GKAGPPGGGS) are compositionally biased toward gly residues. A GAR motif is present at residues 202–206 (RGRGR). A compositionally biased stretch (low complexity) spans 207–219 (FPGAVPGGDRFPG). Composition is skewed to pro residues over residues 220–265 (PAGP…PLAG), 285–366 (GQPP…PPPT), and 377–388 (GPPPTDPYGRPP). Basic and acidic residues predominate over residues 389 to 404 (PYDRGDYGPPGREMDT). A phosphothreonine mark is found at Thr-404 and Thr-407. The segment at 404-551 (TARTPLSEAE…RDREREYRHR (148 aa)) is sufficient for nuclear speckle localization. A necessary for RNA-binding region spans residues 405–551 (ARTPLSEAEF…RDREREYRHR (147 aa)). The interval 481-551 (ESKSYGSGSR…RDREREYRHR (71 aa)) is necessary for interaction with SRSF3, SRSF7 and TRA2B/SFRS10. Residues 489–503 (SRRERSRERDHSRSR) show a composition bias toward basic and acidic residues. Positions 490–551 (RRERSRERDH…RDREREYRHR (62 aa)) are arg/Ser-rich domain. Phosphoserine is present on residues Ser-494, Ser-500, Ser-511, Ser-513, and Ser-525. A compositionally biased stretch (basic residues) spans 504 to 514 (EKSRRHKSRSR). A sufficient for nuclear targeting region spans residues 510–551 (KSRSRDRHDDYYRERSRERERHRDRDRDRDRERDREREYRHR). The segment covering 515-551 (DRHDDYYRERSRERERHRDRDRDRDRERDREREYRHR) has biased composition (basic and acidic residues).

It belongs to the RRM CPSF6/7 family. Component of the cleavage factor Im (CFIm) complex which is a heterotetramer composed of two subunits of NUDT21/CPSF5 and two subunits of CPSF6 or CPSF7 or a heterodimer of CPSF6 and CPSF7. The cleavage factor Im (CFIm) complex associates with the CPSF and CSTF complexes to promote the assembly of the core mRNA 3'-processing machinery. Associates with the exon junction complex (EJC). Associates with the 80S ribosome particle. Interacts (via the RRM domain) with NUDT21/CPSF5; this interaction is direct and enhances binding to RNA. Interacts (via Arg/Ser-rich domain) with FIP1L1 (preferentially via unphosphorylated form and Arg/Glu/Asp-rich domain); this interaction mediates, at least in part, the interaction between the CFIm and CPSF complexes and may be inhibited by CPSF6 hyper-phosphorylation. Interacts (via N-terminus) with NXF1; this interaction is direct. Interacts with SRSF3. Interacts with SRSF7. Interacts with SNRNP70. Interacts with TRA2B/SFRS10. Interacts with UPF1. Interacts with UPF3B. Interacts with VIRMA. Interacts (via Arg/Ser-rich domain) with TNPO3; promoting nuclear import of CPSF6 independently of its phosphorylation status. Interacts with YTHDC1. Phosphorylated. Phosphorylated in the Arg/Ser-rich domain by SRPK1, in vitro. Post-translationally, symmetrically dimethylated on arginine residues by PRMT5 in a WDR77- and CLNS1A-dependent manner. Asymmetrically dimethylated on arginine residues by PRMT1. In terms of processing, symmetrically dimethylated on arginine residues in the GAR motif by PRMT5 in a WDR77- and CLNS1A-dependent manner. Asymmetrically dimethylated on arginine residues in the GAR motif by PRMT1. As to expression, expressed in testis. Expressed in male germ cells (at protein level).

The protein localises to the nucleus. It localises to the nucleoplasm. Its subcellular location is the nucleus speckle. The protein resides in the cytoplasm. Component of the cleavage factor Im (CFIm) complex that functions as an activator of the pre-mRNA 3'-end cleavage and polyadenylation processing required for the maturation of pre-mRNA into functional mRNAs. CFIm contributes to the recruitment of multiprotein complexes on specific sequences on the pre-mRNA 3'-end, so called cleavage and polyadenylation signals (pA signals). Most pre-mRNAs contain multiple pA signals, resulting in alternative cleavage and polyadenylation (APA) producing mRNAs with variable 3'-end formation. The CFIm complex acts as a key regulator of cleavage and polyadenylation site choice during APA through its binding to 5'-UGUA-3' elements localized in the 3'-untranslated region (UTR) for a huge number of pre-mRNAs. CPSF6 enhances NUDT21/CPSF5 binding to 5'-UGUA-3' elements localized upstream of pA signals and promotes RNA looping, and hence activates directly the mRNA 3'-processing machinery. Plays a role in mRNA export. This is Cleavage and polyadenylation specificity factor subunit 6 from Mus musculus (Mouse).